A 386-amino-acid polypeptide reads, in one-letter code: Synaptotagmin-5 (386 aa).

Over residues 1–16 (MFPEPPTPGPPSPDTP) the composition is skewed to pro residues. The disordered stretch occupies residues 1–23 (MFPEPPTPGPPSPDTPPDSSRIS). Residues 1–24 (MFPEPPTPGPPSPDTPPDSSRISH) lie on the Vesicular side of the membrane. The helical transmembrane segment at 25–45 (GPVPPWALATIVLVSGLLIFS) threads the bilayer. Residues 46–386 (CCFCLYRKSC…PDRVRLLPAP (341 aa)) are Cytoplasmic-facing. C2 domains are found at residues 108 to 227 (ELGR…QAWR) and 239 to 372 (KLGD…AQWH). Ca(2+) contacts are provided by leucine 138, aspartate 139, aspartate 145, aspartate 197, phenylalanine 198, aspartate 199, serine 202, aspartate 205, aspartate 270, aspartate 276, aspartate 330, and aspartate 332.

It belongs to the synaptotagmin family. In terms of assembly, homodimer. Interacts with both alpha- and beta-tubulin. Ca(2+) is required as a cofactor.

It localises to the cytoplasmic vesicle. The protein resides in the secretory vesicle. Its subcellular location is the synaptic vesicle membrane. The protein localises to the recycling endosome membrane. In terms of biological role, may be involved in Ca(2+)-dependent exocytosis of secretory vesicles through Ca(2+) and phospholipid binding to the C2 domain or may serve as Ca(2+) sensors in the process of vesicular trafficking and exocytosis. Regulates the Ca(2+)-dependent secretion of norepinephrine in PC12 cells. Required for export from the endocytic recycling compartment to the cell surface. The polypeptide is Synaptotagmin-5 (SYT5) (Homo sapiens (Human)).